A 475-amino-acid polypeptide reads, in one-letter code: Glutamate--tRNA ligase 1 (475 aa).

The short motif at 11–21 is the 'HIGH' region element; the sequence is PSPTGYLHIGG. Positions 240 to 244 match the 'KMSKS' region motif; it reads KLSKR. Lys-243 is an ATP binding site.

This sequence belongs to the class-I aminoacyl-tRNA synthetase family. Glutamate--tRNA ligase type 1 subfamily. Monomer.

Its subcellular location is the cytoplasm. The catalysed reaction is tRNA(Glu) + L-glutamate + ATP = L-glutamyl-tRNA(Glu) + AMP + diphosphate. Functionally, catalyzes the attachment of glutamate to tRNA(Glu) in a two-step reaction: glutamate is first activated by ATP to form Glu-AMP and then transferred to the acceptor end of tRNA(Glu). This Methylobacterium radiotolerans (strain ATCC 27329 / DSM 1819 / JCM 2831 / NBRC 15690 / NCIMB 10815 / 0-1) protein is Glutamate--tRNA ligase 1.